Reading from the N-terminus, the 1149-residue chain is Eukaryotic translation initiation factor 3 subunit A (1149 aa).

The PCI domain maps to 317–498 (IQRMTSHVLI…HSVHFGTDLS (182 aa)). 2 disordered regions span residues 496-515 (DLSESQREDHPDGPTLQSMP) and 811-1149 (EEER…KHHR). Positions 811–885 (EEERRRIEEE…APRGEKEERG (75 aa)) are enriched in basic and acidic residues. Over residues 886 to 895 (GGGGGGGAWR) the composition is skewed to gly residues. A compositionally biased stretch (basic and acidic residues) spans 908 to 924 (AKPESDWRNAREAREPA). A compositionally biased stretch (low complexity) spans 925–937 (PESAGASSAAAPA). Basic and acidic residues-rich tracts occupy residues 961–970 (RPPRGDDREP), 1005–1095 (GPMR…DRRG), and 1113–1132 (EPAKPREERRGGEERPKEAR).

Belongs to the eIF-3 subunit A family. Component of the eukaryotic translation initiation factor 3 (eIF-3) complex.

It localises to the cytoplasm. RNA-binding component of the eukaryotic translation initiation factor 3 (eIF-3) complex, which is involved in protein synthesis of a specialized repertoire of mRNAs and, together with other initiation factors, stimulates binding of mRNA and methionyl-tRNAi to the 40S ribosome. The eIF-3 complex specifically targets and initiates translation of a subset of mRNAs involved in cell proliferation. This chain is Eukaryotic translation initiation factor 3 subunit A, found in Culex quinquefasciatus (Southern house mosquito).